The sequence spans 87 residues: Small ribosomal subunit protein eS21 (87 aa).

It belongs to the eukaryotic ribosomal protein eS21 family. In terms of assembly, component of the small ribosomal subunit. Mature ribosomes consist of a small (40S) and a large (60S) subunit. The 40S subunit contains about 33 different proteins and 1 molecule of RNA (18S). The 60S subunit contains about 49 different proteins and 3 molecules of RNA (25S, 5.8S and 5S).

It is found in the cytoplasm. Its function is as follows. Required for the processing of the 20S rRNA-precursor to mature 18S rRNA in a late step of the maturation of 40S ribosomal subunits. Has a physiological role leading to 18S rRNA stability. This Eremothecium gossypii (strain ATCC 10895 / CBS 109.51 / FGSC 9923 / NRRL Y-1056) (Yeast) protein is Small ribosomal subunit protein eS21 (RPS21).